Here is an 867-residue protein sequence, read N- to C-terminus: Nuclear cap-binding protein subunit 1 (867 aa).

Positions leucine 9–serine 228 constitute an MIF4G domain. The interval serine 752–asparagine 797 is disordered. The segment covering aspartate 788 to asparagine 797 has biased composition (polar residues).

This sequence belongs to the NCBP1 family. Component of the nuclear cap-binding complex (CBC), a heterodimer composed of ABH1/CBP80 and CBP20 that interacts with m7GpppG-capped RNA.

It is found in the nucleus. The protein resides in the cytoplasm. Component of the cap-binding complex (CBC), which binds cotranscriptionally to the 5'-cap of pre-mRNAs and is involved in various processes such as pre-mRNA splicing and RNA-mediated gene silencing (RNAi) by microRNAs (miRNAs). The CBC complex is involved in miRNA-mediated RNA interference and is required for primary miRNA processing. In the CBC complex, ABH1/CBP80 does not bind directly capped RNAs (m7GpppG-capped RNA) but is required to stabilize the movement of the N-terminal loop of CBP20 and lock the CBC into a high affinity cap-binding state with the cap structure. The protein is Nuclear cap-binding protein subunit 1 (ABH1) of Oryza sativa subsp. japonica (Rice).